Consider the following 161-residue polypeptide: Dihydrofolate reductase (161 aa).

Residues 2 to 157 enclose the DHFR domain; the sequence is TLSIIVAHDK…IPHTFLHLVR (156 aa). 6-8 contributes to the substrate binding site; the sequence is IVA. NADP(+) contacts are provided by residues 7–8 and 15–20; these read VA and IGYQNQ. Aspartate 28 serves as a coordination point for substrate. 44–47 is an NADP(+) binding site; it reads GRKT. Arginine 58 is a binding site for substrate. NADP(+) is bound by residues 63–66 and 93–98; these read LTNQ and FGGQTL. Threonine 112 contributes to the substrate binding site.

The protein belongs to the dihydrofolate reductase family.

The catalysed reaction is (6S)-5,6,7,8-tetrahydrofolate + NADP(+) = 7,8-dihydrofolate + NADPH + H(+). Its pathway is cofactor biosynthesis; tetrahydrofolate biosynthesis; 5,6,7,8-tetrahydrofolate from 7,8-dihydrofolate: step 1/1. Its function is as follows. Key enzyme in folate metabolism. Catalyzes an essential reaction for de novo glycine and purine synthesis, and for DNA precursor synthesis. The polypeptide is Dihydrofolate reductase (folA) (Staphylococcus epidermidis).